The following is a 628-amino-acid chain: Biosynthetic arginine decarboxylase (628 aa).

The residue at position 99 (lysine 99) is an N6-(pyridoxal phosphate)lysine. Position 279–289 (valine 279–tyrosine 289) interacts with substrate.

The protein belongs to the Orn/Lys/Arg decarboxylase class-II family. SpeA subfamily. It depends on Mg(2+) as a cofactor. Requires pyridoxal 5'-phosphate as cofactor.

The catalysed reaction is L-arginine + H(+) = agmatine + CO2. It functions in the pathway amine and polyamine biosynthesis; agmatine biosynthesis; agmatine from L-arginine: step 1/1. Functionally, catalyzes the biosynthesis of agmatine from arginine. In Xylella fastidiosa (strain M23), this protein is Biosynthetic arginine decarboxylase.